We begin with the raw amino-acid sequence, 199 residues long: MNVGIIGFQGDVEEHIAIVKKISRRRKGINVLRIRRKEDLDRSDSLIIPGGESTTIYKLISEYGIYDEIIRRAKEGMPVMATCAGLILISKDTNDDRVPGMNLLDVTIMRNAYGRQVNSFETDIDIKGIGTFHAVFIRAPRIKEYGNVDVMASLDGYPVMVRSGNILGMTFHPELTGDVSIHEYFLSMGGGGYISTATG.

Position 51-53 (51-53 (GES)) interacts with L-glutamine. Cys-83 serves as the catalytic Nucleophile. L-glutamine contacts are provided by residues Arg-110 and 137-138 (IR). Catalysis depends on charge relay system residues His-172 and Glu-174.

This sequence belongs to the glutaminase PdxT/SNO family. In the presence of PdxS, forms a dodecamer of heterodimers. Only shows activity in the heterodimer.

It catalyses the reaction aldehydo-D-ribose 5-phosphate + D-glyceraldehyde 3-phosphate + L-glutamine = pyridoxal 5'-phosphate + L-glutamate + phosphate + 3 H2O + H(+). The catalysed reaction is L-glutamine + H2O = L-glutamate + NH4(+). It functions in the pathway cofactor biosynthesis; pyridoxal 5'-phosphate biosynthesis. Its function is as follows. Catalyzes the hydrolysis of glutamine to glutamate and ammonia as part of the biosynthesis of pyridoxal 5'-phosphate. The resulting ammonia molecule is channeled to the active site of PdxS. The polypeptide is Pyridoxal 5'-phosphate synthase subunit PdxT (Thermoplasma volcanium (strain ATCC 51530 / DSM 4299 / JCM 9571 / NBRC 15438 / GSS1)).